Reading from the N-terminus, the 105-residue chain is Small ribosomal subunit protein uS10 (105 aa).

The protein belongs to the universal ribosomal protein uS10 family. In terms of assembly, part of the 30S ribosomal subunit.

Involved in the binding of tRNA to the ribosomes. The polypeptide is Small ribosomal subunit protein uS10 (Rickettsia typhi (strain ATCC VR-144 / Wilmington)).